The chain runs to 230 residues: UPF0702 transmembrane protein YcaP (230 aa).

A run of 3 helical transmembrane segments spans residues 16–36, 48–68, and 75–95; these read FDFL…VFLF, MSLF…DVAF, and VPVL…MWLM.

It belongs to the UPF0702 family.

It is found in the cell membrane. The protein is UPF0702 transmembrane protein YcaP (ycaP) of Escherichia coli (strain K12).